A 615-amino-acid polypeptide reads, in one-letter code: Alpha-1,3-galactosidase B (615 aa).

A signal peptide spans 1-23 (MRTFLSLKTCLLSALLLCVNSIA). PbH1 repeat units follow at residues 282 to 313 (SKNI…HFMG), 423 to 445 (TPDA…LVST), 446 to 467 (PGKV…LIAG), 478 to 500 (VKDV…YQFC), 520 to 541 (HRNI…LFAR), and 543 to 573 (VNGL…TLEA).

It belongs to the glycosyl hydrolase 110 family. B subfamily.

The catalysed reaction is Hydrolysis of terminal, non-reducing branched (1-&gt;3)-alpha-D-galactosidic residues, producing free D-galactose.. The enzyme catalyses Hydrolysis of terminal, non-reducing linear (1-&gt;3)-alpha-D-galactosidic residues, producing free D-galactose.. It carries out the reaction Hydrolysis of terminal, non-reducing alpha-D-galactose residues in alpha-D-galactosides, including galactose oligosaccharides, galactomannans and galactolipids.. In terms of biological role, alpha-galactosidase. Removes both branched alpha-1,3-linked galactose residues of blood group B antigens and linear alpha-1,3-linked galactose structures. The protein is Alpha-1,3-galactosidase B (glaB) of Bacteroides thetaiotaomicron (strain ATCC 29148 / DSM 2079 / JCM 5827 / CCUG 10774 / NCTC 10582 / VPI-5482 / E50).